The primary structure comprises 366 residues: Dehydrogenase aclE (366 aa).

Residues 1–19 (MSKRIRLGIVGLSADPSHC) form the signal peptide. The N-linked (GlcNAc...) asparagine glycan is linked to Asn330.

The protein belongs to the Gfo/Idh/MocA family.

It participates in mycotoxin biosynthesis. Its function is as follows. Dehydrogenase; part of the gene cluster that mediates the biosynthesis of aspirochlorine (or antibiotic A30641), an unusual halogenated spiro compound with distinctive antifungal properties due to selective inhibition of protein biosynthesis, and which is also active against bacteria, viruses, and murine tumor cells. The non-ribosomal peptide synthetase (NRPS) aclP is responsible the formation of the diketopiperazine (DKP) core from the condensation of 2 phenylalanine residues. One Phe residue is tailored into chlorotyrosine by hydroxylation and chlorination, whereas the second Phe undergoes an unprecedented C-C bond cleavage to be converted into glycine. After formation of the DKP, sulfur is incorporated into the DKP by conjugation with glutathione by aclG, followed by its stepwise degradation to the thiol by aclI, aclJ and aclK, and the dithiol oxidation by aclT. In addition, oxygenases (aclB, aclC, aclL and aclO) and O-methyltransferases (aclM and aclU) act as tailoring enzymes to produce the intermediate dechloroaspirochlorine. Ultimately, chlorination of dechloroaspirochlorine by the halogenase aclH is the last step in the aspirochlorine pathway. The sequence is that of Dehydrogenase aclE from Aspergillus oryzae (strain ATCC 42149 / RIB 40) (Yellow koji mold).